The sequence spans 485 residues: Adenylate kinase 8 (485 aa).

Adenylate kinase stretches follow at residues 58–258 (PRVF…TFVL) and 269–471 (PRIL…SYIV). 67–72 (ASGKHT) contacts ATP. Residues 87–113 (TPENVLSSDVSLLVKEAQSYRDKGQEV) are NMP 1. AMP is bound by residues 140-143 (GFPK) and Gln147. Positions 177 to 206 (GKRIDITDGEVYHTTFDWPSDPAVQRNLVE) are LID 1. Position 218 (Arg218) interacts with AMP. An ATP-binding site is contributed by 278–283 (GSGRSL). Positions 298–327 (CCGQVLKEAVADQTKLGELIQPYIENDQQV) are NMP 2. AMP contacts are provided by residues 325-327 (QQV), 354-357 (GFPQ), and Gln361. An LID 2 region spans residues 391 to 424 (LCMTDPVSGERYHSIYKPAPRSEVQERLQQNPKY). Residue Arg432 coordinates AMP.

Belongs to the adenylate kinase family.

It localises to the cytoplasm. The protein resides in the cytosol. The catalysed reaction is AMP + ATP = 2 ADP. The enzyme catalyses a 2'-deoxyribonucleoside 5'-diphosphate + ATP = a 2'-deoxyribonucleoside 5'-triphosphate + ADP. It carries out the reaction a ribonucleoside 5'-diphosphate + ATP = a ribonucleoside 5'-triphosphate + ADP. In terms of biological role, nucleoside monophosphate (NMP) kinase that catalyzes the reversible transfer of the terminal phosphate group between nucleoside triphosphates and monophosphates. Has highest activity toward AMP, and weaker activity toward dAMP, CMP and dCMP. Also displays broad nucleoside diphosphate kinase activity. The chain is Adenylate kinase 8 (ak8) from Xenopus laevis (African clawed frog).